The chain runs to 120 residues: Large ribosomal subunit protein bL17 (120 aa).

It belongs to the bacterial ribosomal protein bL17 family. In terms of assembly, part of the 50S ribosomal subunit. Contacts protein L32.

The polypeptide is Large ribosomal subunit protein bL17 (Mesomycoplasma hyopneumoniae (strain J / ATCC 25934 / NCTC 10110) (Mycoplasma hyopneumoniae)).